The primary structure comprises 113 residues: MAQQRKLGLPTDHRRAMLRNLVTSFLKNGKVETTITRAKEARNMAEKMITLAKRGDLHARRQVLAYVTEKEVVDHLFAEIAPKYADRNGGYTRMYKMGPRRGDGAEVVILELV.

This sequence belongs to the bacterial ribosomal protein bL17 family. In terms of assembly, part of the 50S ribosomal subunit. Contacts protein L32.

The polypeptide is Large ribosomal subunit protein bL17 (Clostridium novyi (strain NT)).